The chain runs to 577 residues: Aspartate--tRNA(Asp/Asn) ligase (577 aa).

Glu-171 serves as a coordination point for L-aspartate. Residues 195–198 form an aspartate region; sequence QLFK. Arg-217 contributes to the L-aspartate binding site. Residues 217-219 and Gln-226 each bind ATP; that span reads RDE. His-444 contributes to the L-aspartate binding site. Residue Glu-474 participates in ATP binding. Arg-481 provides a ligand contact to L-aspartate. 526–529 is a binding site for ATP; that stretch reads GFDR.

This sequence belongs to the class-II aminoacyl-tRNA synthetase family. Type 1 subfamily. In terms of assembly, homodimer.

The protein resides in the cytoplasm. It catalyses the reaction tRNA(Asx) + L-aspartate + ATP = L-aspartyl-tRNA(Asx) + AMP + diphosphate. Its function is as follows. Aspartyl-tRNA synthetase with relaxed tRNA specificity since it is able to aspartylate not only its cognate tRNA(Asp) but also tRNA(Asn). Reaction proceeds in two steps: L-aspartate is first activated by ATP to form Asp-AMP and then transferred to the acceptor end of tRNA(Asp/Asn). This is Aspartate--tRNA(Asp/Asn) ligase from Helicobacter pylori (strain HPAG1).